The chain runs to 108 residues: SPbeta prophage-derived uncharacterized HTH-type transcriptional regulator YonR (108 aa).

The 55-residue stretch at 6-60 (LKKCRTSKGYSQQRMADFLGITRQGYGKYEIGKAEPDLKTLTKLSNILGVSTDFL) folds into the HTH cro/C1-type domain. Residues 17–36 (QQRMADFLGITRQGYGKYEI) constitute a DNA-binding region (H-T-H motif).

The polypeptide is SPbeta prophage-derived uncharacterized HTH-type transcriptional regulator YonR (yonR) (Bacillus subtilis (strain 168)).